A 514-amino-acid chain; its full sequence is Thymus-specific serine protease (514 aa).

An N-terminal signal peptide occupies residues 1-24 (MAVWLAQWLGPLLLVSLWGLLAPA). N-linked (GlcNAc...) asparagine glycans are attached at residues Asn-70 and Asn-172. Catalysis depends on Ser-185, which acts as the Charge relay system. Asn-321 is a glycosylation site (N-linked (GlcNAc...) asparagine). Catalysis depends on charge relay system residues Asp-447 and His-472.

The protein belongs to the peptidase S28 family. As to expression, expressed predominantly in cortical thymic epithelial cells.

It localises to the cytoplasmic vesicle. Functionally, protease that may play a role in T-cell development. The sequence is that of Thymus-specific serine protease (PRSS16) from Homo sapiens (Human).